We begin with the raw amino-acid sequence, 350 residues long: Protein-glutamate methylesterase/protein-glutamine glutaminase 1 (350 aa).

Residues 1-116 enclose the Response regulatory domain; that stretch reads MVVDDSAVVR…KGFLHDSAKV (116 aa). Residue D50 is modified to 4-aspartylphosphate. The CheB-type methylesterase domain occupies 160-350; sequence LKTTEQLVAI…IPQAILDCSH (191 aa). Catalysis depends on residues S172, H198, and D294.

This sequence belongs to the CheB family. Phosphorylated by CheA. Phosphorylation of the N-terminal regulatory domain activates the methylesterase activity.

It localises to the cytoplasm. It carries out the reaction [protein]-L-glutamate 5-O-methyl ester + H2O = L-glutamyl-[protein] + methanol + H(+). The enzyme catalyses L-glutaminyl-[protein] + H2O = L-glutamyl-[protein] + NH4(+). In terms of biological role, involved in chemotaxis. Part of a chemotaxis signal transduction system that modulates chemotaxis in response to various stimuli. Catalyzes the demethylation of specific methylglutamate residues introduced into the chemoreceptors (methyl-accepting chemotaxis proteins or MCP) by CheR. Also mediates the irreversible deamidation of specific glutamine residues to glutamic acid. In Photobacterium profundum (strain SS9), this protein is Protein-glutamate methylesterase/protein-glutamine glutaminase 1.